We begin with the raw amino-acid sequence, 260 residues long: Cytochrome c oxidase subunit 3 (260 aa).

Over Met-1–Pro-15 the chain is Mitochondrial matrix. The chain crosses the membrane as a helical span at residues Trp-16–Trp-34. Over Phe-35–Met-40 the chain is Mitochondrial intermembrane. A helical membrane pass occupies residues Ile-41–Thr-66. At Phe-67–Thr-72 the chain is on the mitochondrial matrix side. Residues Pro-73–Ser-105 traverse the membrane as a helical segment. Over Leu-106–Glu-128 the chain is Mitochondrial intermembrane. Residues Val-129–Met-152 form a helical membrane-spanning segment. At His-153–Asp-155 the chain is on the mitochondrial matrix side. The helical transmembrane segment at Arg-156–Glu-183 threads the bilayer. At Ala-184–Asp-190 the chain is on the mitochondrial intermembrane side. Residues Gly-191–Ile-223 traverse the membrane as a helical segment. The Mitochondrial matrix portion of the chain corresponds to Gln-224 to His-232. The helical transmembrane segment at Phe-233–Ile-255 threads the bilayer. The Mitochondrial intermembrane segment spans residues Tyr-256 to Ser-260.

Belongs to the cytochrome c oxidase subunit 3 family. As to quaternary structure, component of the cytochrome c oxidase (complex IV, CIV), a multisubunit enzyme composed of 14 subunits. The complex is composed of a catalytic core of 3 subunits MT-CO1, MT-CO2 and MT-CO3, encoded in the mitochondrial DNA, and 11 supernumerary subunits COX4I, COX5A, COX5B, COX6A, COX6B, COX6C, COX7A, COX7B, COX7C, COX8 and NDUFA4, which are encoded in the nuclear genome. The complex exists as a monomer or a dimer and forms supercomplexes (SCs) in the inner mitochondrial membrane with NADH-ubiquinone oxidoreductase (complex I, CI) and ubiquinol-cytochrome c oxidoreductase (cytochrome b-c1 complex, complex III, CIII), resulting in different assemblies (supercomplex SCI(1)III(2)IV(1) and megacomplex MCI(2)III(2)IV(2)).

It is found in the mitochondrion inner membrane. The catalysed reaction is 4 Fe(II)-[cytochrome c] + O2 + 8 H(+)(in) = 4 Fe(III)-[cytochrome c] + 2 H2O + 4 H(+)(out). Functionally, component of the cytochrome c oxidase, the last enzyme in the mitochondrial electron transport chain which drives oxidative phosphorylation. The respiratory chain contains 3 multisubunit complexes succinate dehydrogenase (complex II, CII), ubiquinol-cytochrome c oxidoreductase (cytochrome b-c1 complex, complex III, CIII) and cytochrome c oxidase (complex IV, CIV), that cooperate to transfer electrons derived from NADH and succinate to molecular oxygen, creating an electrochemical gradient over the inner membrane that drives transmembrane transport and the ATP synthase. Cytochrome c oxidase is the component of the respiratory chain that catalyzes the reduction of oxygen to water. Electrons originating from reduced cytochrome c in the intermembrane space (IMS) are transferred via the dinuclear copper A center (CU(A)) of subunit 2 and heme A of subunit 1 to the active site in subunit 1, a binuclear center (BNC) formed by heme A3 and copper B (CU(B)). The BNC reduces molecular oxygen to 2 water molecules using 4 electrons from cytochrome c in the IMS and 4 protons from the mitochondrial matrix. This is Cytochrome c oxidase subunit 3 (mt-co3) from Xenopus laevis (African clawed frog).